Here is a 721-residue protein sequence, read N- to C-terminus: MQGQTQSISFDGREIRLTTGRFAPQAGGSVLVECGDTAVLVTATRSGGREGIDFLPLICDYEERLYAAGRIPGSYMRRESRPPERATLTARLIDRPMRPLFPSWLRDDLQVVATCLSLDERVPADVLAVTGASIATLLAGIPFNGPMAAVRVGLLGDDFVLNPSYREIERGDLDLVVAGTPDGVVMVEAGANQLPEQDVIEAIDFGYEAICELIKAQEQLLKDLGITQVKPEKPDEDSTVPAYLEKQCSKAISAVLSKFDQSKDERDTALETVKGEVSETIAGLKEDHAVRQALASSPKLLGNSFKALTKKLMRQQILKDGKRVDGRGLDEVRQISAMAGVLPRRVHGSGLFQRGLTQVLSTATLGTPSDAQEMDDLHPNTEKLYLHHYNFPPYSVGETRPMRSPGRREIGHGALAERAILPVLPEKDTFPYVVRVVSEVLSSNGSTSMGSVCGSTLSLMDAGVPLKAPVSGAAMGLIKEGDEVRILTDIQGIEDFLGDMDFKVAGSEKGITALQMDMKITGLSVKTVAEAVNQARPARLHILEKMLEAIDTPRDNLSPHAPRLLSFRIDPELIGTVIGPGGRTIKGITERTNTKIDIEDGGIVTIASHDGAAAEEAQKIIEGLTRKVNEGEVFSGSITRIIPIGAFVEILPGKEGMIHISQLSEARVEKVEDVVKVGDEVTVRVREIDNRGRINLTLRGVPQAGDAADVEPQPTPVAPLS.

Mg(2+)-binding residues include aspartate 495 and aspartate 501. One can recognise a KH domain in the interval 562–621 (PRLLSFRIDPELIGTVIGPGGRTIKGITERTNTKIDIEDGGIVTIASHDGAAAEEAQKII). The S1 motif domain occupies 631 to 699 (GEVFSGSITR…NRGRINLTLR (69 aa)).

The protein belongs to the polyribonucleotide nucleotidyltransferase family. Mg(2+) serves as cofactor.

The protein resides in the cytoplasm. The catalysed reaction is RNA(n+1) + phosphate = RNA(n) + a ribonucleoside 5'-diphosphate. Involved in mRNA degradation. Catalyzes the phosphorolysis of single-stranded polyribonucleotides processively in the 3'- to 5'-direction. This is Polyribonucleotide nucleotidyltransferase from Synechococcus sp. (strain CC9605).